The chain runs to 479 residues: Glycogen synthase (479 aa).

Residue lysine 16 participates in ADP-alpha-D-glucose binding.

This sequence belongs to the glycosyltransferase 1 family. Bacterial/plant glycogen synthase subfamily.

It catalyses the reaction [(1-&gt;4)-alpha-D-glucosyl](n) + ADP-alpha-D-glucose = [(1-&gt;4)-alpha-D-glucosyl](n+1) + ADP + H(+). It functions in the pathway glycan biosynthesis; glycogen biosynthesis. Its function is as follows. Synthesizes alpha-1,4-glucan chains using ADP-glucose. This chain is Glycogen synthase, found in Lactiplantibacillus plantarum (strain ATCC BAA-793 / NCIMB 8826 / WCFS1) (Lactobacillus plantarum).